A 165-amino-acid polypeptide reads, in one-letter code: Large ribosomal subunit protein uL11 (165 aa).

The protein belongs to the universal ribosomal protein uL11 family. As to quaternary structure, part of the ribosomal stalk of the 50S ribosomal subunit. Interacts with L10 and the large rRNA to form the base of the stalk. L10 forms an elongated spine to which L12 dimers bind in a sequential fashion forming a multimeric L10(L12)X complex.

Functionally, forms part of the ribosomal stalk which helps the ribosome interact with GTP-bound translation factors. The sequence is that of Large ribosomal subunit protein uL11 from Thermococcus kodakarensis (strain ATCC BAA-918 / JCM 12380 / KOD1) (Pyrococcus kodakaraensis (strain KOD1)).